The following is a 189-amino-acid chain: Translation initiation factor IF-3 (189 aa).

This sequence belongs to the IF-3 family. As to quaternary structure, monomer.

It is found in the cytoplasm. In terms of biological role, IF-3 binds to the 30S ribosomal subunit and shifts the equilibrium between 70S ribosomes and their 50S and 30S subunits in favor of the free subunits, thus enhancing the availability of 30S subunits on which protein synthesis initiation begins. In Corynebacterium glutamicum (strain R), this protein is Translation initiation factor IF-3.